Reading from the N-terminus, the 420-residue chain is UDP-N-acetylglucosamine 1-carboxyvinyltransferase (420 aa).

22-23 (KN) contacts phosphoenolpyruvate. Arg93 lines the UDP-N-acetyl-alpha-D-glucosamine pocket. Cys117 serves as the catalytic Proton donor. Residue Cys117 is modified to 2-(S-cysteinyl)pyruvic acid O-phosphothioketal. Residues Asp307 and Ile329 each coordinate UDP-N-acetyl-alpha-D-glucosamine.

This sequence belongs to the EPSP synthase family. MurA subfamily.

It localises to the cytoplasm. The enzyme catalyses phosphoenolpyruvate + UDP-N-acetyl-alpha-D-glucosamine = UDP-N-acetyl-3-O-(1-carboxyvinyl)-alpha-D-glucosamine + phosphate. Its pathway is cell wall biogenesis; peptidoglycan biosynthesis. In terms of biological role, cell wall formation. Adds enolpyruvyl to UDP-N-acetylglucosamine. In Shewanella halifaxensis (strain HAW-EB4), this protein is UDP-N-acetylglucosamine 1-carboxyvinyltransferase.